A 220-amino-acid chain; its full sequence is Inner membrane-spanning protein YciB (220 aa).

The next 6 helical transmembrane spans lie at 20-40, 57-77, 86-106, 123-143, 156-176, and 187-207; these read EVPPLLKLALELGPLLVFFFA, IGAPIFLATALFMAATVIALA, LPIMPLVSGIVVLVFGALTLW, LFGGILLGGLFFGKSLLGYVF, KLTLRWGLFFIFLAIVNEIVW, and FKVWGIMPITIVFTLLQMPLI.

This sequence belongs to the YciB family.

The protein resides in the cell inner membrane. In terms of biological role, plays a role in cell envelope biogenesis, maintenance of cell envelope integrity and membrane homeostasis. This is Inner membrane-spanning protein YciB from Brucella abortus (strain S19).